Reading from the N-terminus, the 563-residue chain is F-box/kelch-repeat protein At5g42350 (563 aa).

The F-box domain occupies 129–175 (YRKHVYLPDDILEMCLMRLPLTSLLNAHLVCKKWQSMANTQRFLQMR). Kelch repeat units follow at residues 184–231 (WLFL…SIHE), 232–282 (EIYI…ATEV), and 355–402 (VLIA…IICN).

The chain is F-box/kelch-repeat protein At5g42350 from Arabidopsis thaliana (Mouse-ear cress).